Here is a 417-residue protein sequence, read N- to C-terminus: SNF1 protein kinase subunit beta-3 (417 aa).

Positions 1-12 (MAGDNPENKDAS) are enriched in basic and acidic residues. A disordered region spans residues 1–37 (MAGDNPENKDASMLDVSDAASNTTINGKHSADSTNEA). Phosphoserine occurs at positions 12, 21, 44, and 135. Polar residues predominate over residues 19-37 (AASNTTINGKHSADSTNEA). Disordered regions lie at residues 64–155 (SSLI…VEGK) and 250–269 (GNEPQQHLAEKKANHVDDSK). A compositionally biased stretch (polar residues) spans 118–136 (TGNTLQKMDYQPSQQPDSL). Over residues 137 to 149 (QNQGFQQQQEQQQ) the composition is skewed to low complexity. The tract at residues 152–342 (VEGKKGRAMM…DQQQNNHQNM (191 aa)) is kinase-interacting sequence (KIS); required for interaction with SNF1. Positions 257-269 (LAEKKANHVDDSK) are enriched in basic and acidic residues. Phosphoserine is present on residues Ser-276 and Ser-279. The interval 343–417 (AWLTPPQLPP…VTQILYTPLQ (75 aa)) is association with SNF1 kinase complex (ASC) domain; required for interaction with SNF4.

The protein belongs to the 5'-AMP-activated protein kinase beta subunit family. In terms of assembly, component of the SNF1 kinase complex, a heterotrimeric complex composed of the catalytic alpha subunit SNF1, one of the three related beta subunits SIP1, SIP2 or GAL83, and the regulatory gamma subunit SNF4. The beta subunit serves as a bridge between the catalytic and the regulatory subunit. Interacts (via KIS domain) with SNF1. Interacts (via ASC domain) with SNF4. Interacts with REE1. In terms of processing, phosphorylated by SNF1 in vitro.

It is found in the cytoplasm. The protein localises to the nucleus. Beta subunit of the SNF1 kinase complex, which is required for transcriptional, metabolic, and developmental adaptations in response to glucose limitation. Has a structural role, mediating heterotrimer formation, and a regulatory role, defining carbon source-regulated subcellular location and substrate specificity of the SNF1 kinase complex. Promotes the relocalization of the SNF1 kinase complex to the nucleus upon shift to nonfermentable carbon sources. This chain is SNF1 protein kinase subunit beta-3 (GAL83), found in Saccharomyces cerevisiae (strain ATCC 204508 / S288c) (Baker's yeast).